The chain runs to 382 residues: Lipid-A-disaccharide synthase (382 aa).

The protein belongs to the LpxB family.

It catalyses the reaction 2-N,3-O-bis[(3R)-3-hydroxytetradecanoyl]-alpha-D-glucosaminyl 1-phosphate + UDP-2-N,3-O-bis[(3R)-3-hydroxytetradecanoyl]-alpha-D-glucosamine = lipid A disaccharide (E. coli) + UDP + H(+). It carries out the reaction a lipid X + a UDP-2-N,3-O-bis[(3R)-3-hydroxyacyl]-alpha-D-glucosamine = a lipid A disaccharide + UDP + H(+). It functions in the pathway glycolipid biosynthesis; lipid IV(A) biosynthesis; lipid IV(A) from (3R)-3-hydroxytetradecanoyl-[acyl-carrier-protein] and UDP-N-acetyl-alpha-D-glucosamine: step 5/6. In terms of biological role, condensation of UDP-2,3-diacylglucosamine and 2,3-diacylglucosamine-1-phosphate to form lipid A disaccharide, a precursor of lipid A, a phosphorylated glycolipid that anchors the lipopolysaccharide to the outer membrane of the cell. In Salmonella paratyphi B (strain ATCC BAA-1250 / SPB7), this protein is Lipid-A-disaccharide synthase.